Here is a 128-residue protein sequence, read N- to C-terminus: NADH dehydrogenase [ubiquinone] 1 beta subcomplex subunit 6 (128 aa).

At Thr-2 the chain carries N-acetylthreonine. Lys-24 carries the N6-acetyllysine modification. Residues Ser-68–Met-86 traverse the membrane as a helical segment.

This sequence belongs to the complex I NDUFB6 subunit family. As to quaternary structure, complex I is composed of 45 different subunits.

It is found in the mitochondrion inner membrane. Its function is as follows. Accessory subunit of the mitochondrial membrane respiratory chain NADH dehydrogenase (Complex I), that is believed not to be involved in catalysis. Complex I functions in the transfer of electrons from NADH to the respiratory chain. The immediate electron acceptor for the enzyme is believed to be ubiquinone. The polypeptide is NADH dehydrogenase [ubiquinone] 1 beta subcomplex subunit 6 (NDUFB6) (Pongo abelii (Sumatran orangutan)).